We begin with the raw amino-acid sequence, 218 residues long: Thiopurine S-methyltransferase (218 aa).

Residues Trp10, Leu45, Glu66, and Arg123 each contribute to the S-adenosyl-L-methionine site.

Belongs to the class I-like SAM-binding methyltransferase superfamily. TPMT family.

The protein localises to the cytoplasm. The catalysed reaction is S-adenosyl-L-methionine + a thiopurine = S-adenosyl-L-homocysteine + a thiopurine S-methylether.. Its function is as follows. Involved in the biological cycling of tellurium and selenium. Tellurium resistance (Ter) mechanism. This Pseudomonas syringae pv. pisi protein is Thiopurine S-methyltransferase.